We begin with the raw amino-acid sequence, 874 residues long: Tyrosine-protein kinase receptor TYRO3 (874 aa).

Positions 1-20 are cleaved as a signal peptide; sequence MEVSLCILLFLLHFNEGIHG. 2 Ig-like C2-type domains span residues 21-106 and 117-198; these read VRFT…IISS and PHFG…GTVH. At 21-411 the chain is on the extracellular side; it reads VRFTQKPFHQ…QAQTQRGHMW (391 aa). A disulfide bond links cysteine 42 and cysteine 95. 6 N-linked (GlcNAc...) asparagine glycosylation sites follow: asparagine 135, asparagine 174, asparagine 217, asparagine 270, asparagine 305, and asparagine 373. Cysteine 138 and cysteine 181 are oxidised to a cystine. Fibronectin type-III domains are found at residues 202-297 and 299-403; these read RPDS…TPQA and PSAA…AMQA. The chain crosses the membrane as a helical span at residues 412–432; it reads VGLLFGLLVATMVGLLLIVLI. The Cytoplasmic portion of the chain corresponds to 433–874; sequence RNRGKETQFG…EEEEDVIINV (442 aa). In terms of domain architecture, Protein kinase spans 497-768; that stretch reads LTLGRMLGKG…QHLIDQLELL (272 aa). ATP contacts are provided by residues 503-511 and lysine 529; that span reads LGKGEFGSV. Aspartate 634 (proton acceptor) is an active-site residue. Phosphotyrosine; by autocatalysis is present on tyrosine 665.

The protein belongs to the protein kinase superfamily. Tyr protein kinase family. AXL/UFO subfamily.

The protein resides in the cell membrane. The catalysed reaction is L-tyrosyl-[protein] + ATP = O-phospho-L-tyrosyl-[protein] + ADP + H(+). Its function is as follows. May be involved in cell adhesion processes, particularly in the central nervous system. This chain is Tyrosine-protein kinase receptor TYRO3 (tyro3), found in Danio rerio (Zebrafish).